The following is a 317-amino-acid chain: F-box protein FBW2 (317 aa).

The 48-residue stretch at 7 to 54 folds into the F-box domain; the sequence is FRHWDELIPDALGLIFSHLPLQEVLTVVPRVCKAWNRAVTGPYCWQEI.

Part of a SCF (SKP1-cullin-F-box) protein ligase complex. Interacts with CUL1, CUL2 and SPK1B/ASK2.

Its subcellular location is the nucleus. It participates in protein modification; protein ubiquitination. Its function is as follows. Component of SCF(ASK-cullin-F-box) E3 ubiquitin ligase complexes, which may mediate the ubiquitination and subsequent proteasomal degradation of target proteins. The sequence is that of F-box protein FBW2 (FBW2) from Arabidopsis thaliana (Mouse-ear cress).